Reading from the N-terminus, the 119-residue chain is Immunoglobulin lambda variable 4-69 (119 aa).

Positions 1–20 (MAWTPLLFLTLLLHCTGSLS) are cleaved as a signal peptide. The segment at 21–45 (QLVLTQSPSASASLGASVKLTCTLS) is framework-1. The Ig-like domain maps to 21-119 (QLVLTQSPSA…YYCQTWGTGI (99 aa)). A disulfide bridge links cysteine 42 with cysteine 112. The tract at residues 46–52 (SGHSSYA) is complementarity-determining-1. The interval 53-69 (IAWHQQQPEKGPRYLMK) is framework-2. The tract at residues 70 to 76 (LNSDGSH) is complementarity-determining-2. Residues 73 to 92 (DGSHSKGDGIPDRFSGSSSG) form a disordered region. The tract at residues 77–112 (SKGDGIPDRFSGSSSGAERYLTISSLQSEDEADYYC) is framework-3. The interval 113-119 (QTWGTGI) is complementarity-determining-3.

Immunoglobulins are composed of two identical heavy chains and two identical light chains; disulfide-linked.

Its subcellular location is the secreted. It localises to the cell membrane. In terms of biological role, v region of the variable domain of immunoglobulin light chains that participates in the antigen recognition. Immunoglobulins, also known as antibodies, are membrane-bound or secreted glycoproteins produced by B lymphocytes. In the recognition phase of humoral immunity, the membrane-bound immunoglobulins serve as receptors which, upon binding of a specific antigen, trigger the clonal expansion and differentiation of B lymphocytes into immunoglobulins-secreting plasma cells. Secreted immunoglobulins mediate the effector phase of humoral immunity, which results in the elimination of bound antigens. The antigen binding site is formed by the variable domain of one heavy chain, together with that of its associated light chain. Thus, each immunoglobulin has two antigen binding sites with remarkable affinity for a particular antigen. The variable domains are assembled by a process called V-(D)-J rearrangement and can then be subjected to somatic hypermutations which, after exposure to antigen and selection, allow affinity maturation for a particular antigen. This Homo sapiens (Human) protein is Immunoglobulin lambda variable 4-69.